The following is a 635-amino-acid chain: Threonine--tRNA ligase (635 aa).

In terms of domain architecture, TGS spans 1–61 (MINISFPDGS…DNDCKLRILT (61 aa)). Residues 242-533 (DHRKLGRELD…LIEEYAGRFP (292 aa)) form a catalytic region. The Zn(2+) site is built by C333, H384, and H510.

It belongs to the class-II aminoacyl-tRNA synthetase family. Homodimer. Zn(2+) is required as a cofactor.

The protein localises to the cytoplasm. It catalyses the reaction tRNA(Thr) + L-threonine + ATP = L-threonyl-tRNA(Thr) + AMP + diphosphate + H(+). Functionally, catalyzes the attachment of threonine to tRNA(Thr) in a two-step reaction: L-threonine is first activated by ATP to form Thr-AMP and then transferred to the acceptor end of tRNA(Thr). Also edits incorrectly charged L-seryl-tRNA(Thr). This chain is Threonine--tRNA ligase, found in Rickettsia peacockii (strain Rustic).